The primary structure comprises 338 residues: Ketol-acid reductoisomerase (NADP(+)) (338 aa).

A KARI N-terminal Rossmann domain is found at 1-181; that stretch reads MNVFYDKDAD…GGGRAGIIET (181 aa). NADP(+) is bound by residues 24-27, R47, and S52; that span reads YGSQ. Residue H107 is part of the active site. G133 lines the NADP(+) pocket. One can recognise a KARI C-terminal knotted domain in the interval 182–327; the sequence is NFREETETDL…AKLRAMMPWI (146 aa). Positions 190, 194, 226, and 230 each coordinate Mg(2+). S251 contributes to the substrate binding site.

This sequence belongs to the ketol-acid reductoisomerase family. Mg(2+) serves as cofactor.

It carries out the reaction (2R)-2,3-dihydroxy-3-methylbutanoate + NADP(+) = (2S)-2-acetolactate + NADPH + H(+). It catalyses the reaction (2R,3R)-2,3-dihydroxy-3-methylpentanoate + NADP(+) = (S)-2-ethyl-2-hydroxy-3-oxobutanoate + NADPH + H(+). Its pathway is amino-acid biosynthesis; L-isoleucine biosynthesis; L-isoleucine from 2-oxobutanoate: step 2/4. The protein operates within amino-acid biosynthesis; L-valine biosynthesis; L-valine from pyruvate: step 2/4. Involved in the biosynthesis of branched-chain amino acids (BCAA). Catalyzes an alkyl-migration followed by a ketol-acid reduction of (S)-2-acetolactate (S2AL) to yield (R)-2,3-dihydroxy-isovalerate. In the isomerase reaction, S2AL is rearranged via a Mg-dependent methyl migration to produce 3-hydroxy-3-methyl-2-ketobutyrate (HMKB). In the reductase reaction, this 2-ketoacid undergoes a metal-dependent reduction by NADPH to yield (R)-2,3-dihydroxy-isovalerate. This Burkholderia cenocepacia (strain ATCC BAA-245 / DSM 16553 / LMG 16656 / NCTC 13227 / J2315 / CF5610) (Burkholderia cepacia (strain J2315)) protein is Ketol-acid reductoisomerase (NADP(+)).